A 228-amino-acid chain; its full sequence is Cell surface Cu-only superoxide dismutase 5 (228 aa).

An N-terminal signal peptide occupies residues 1-15; it reads MKYLSIFLLATFALA. A glycan (N-linked (GlcNAc...) asparagine) is linked at N53. Residues H75 and H77 each contribute to the Cu cation site. N-linked (GlcNAc...) asparagine glycosylation occurs at N86. The cysteines at positions 87 and 162 are disulfide-linked. Position 93 (H93) interacts with Cu cation. N98 is a glycosylation site (N-linked (GlcNAc...) asparagine). H153 lines the Cu cation pocket. N156, N164, N176, N181, and N192 each carry an N-linked (GlcNAc...) asparagine glycan. Low complexity predominate over residues 176 to 201; sequence NTTMSNSSSSSSQSAVNTSSSMASTA. The tract at residues 176–204 is disordered; the sequence is NTTMSNSSSSSSQSAVNTSSSMASTAPQG. N205 carries the GPI-anchor amidated asparagine lipid modification. A propeptide spans 206-228 (removed in mature form); it reads GAERAVVNGLLAAGVVGVIAALI.

Belongs to the Cu-Zn superoxide dismutase family. As to quaternary structure, monomer. It depends on Cu cation as a cofactor. The GPI-anchor is attached to the protein in the endoplasmic reticulum and serves to target the protein to the cell surface. There, the glucosamine-inositol phospholipid moiety is cleaved off and the GPI-modified mannoprotein is covalently attached via its lipidless GPI glycan remnant to the 1,6-beta-glucan of the outer cell wall layer.

It localises to the secreted. The protein localises to the cell wall. Its subcellular location is the membrane. It carries out the reaction 2 superoxide + 2 H(+) = H2O2 + O2. Secreted in a disulfide-oxidized form and apo-pools of secreted SOD5 can readily capture extracellular copper for rapid induction of enzyme activity. Its function is as follows. Superoxide dismutases serve to convert damaging superoxide radicals, a key form of ROS, to less damaging hydrogen peroxide that can be converted into water by catalase action. Degrades host-derived reactive oxygen species to escape innate immune surveillance. Involved in the occurrence of miconazole-tolerant persisters in biofilms. Persisters are cells that survive high doses of an antimicrobial agent. The unusual attributes of SOD5-like fungal proteins, including the absence of zinc and an open active site that readily captures extracellular copper, make these SODs well suited to meet challenges in zinc and copper availability at the host-pathogen interface. The polypeptide is Cell surface Cu-only superoxide dismutase 5 (SOD5) (Candida albicans (strain SC5314 / ATCC MYA-2876) (Yeast)).